The primary structure comprises 347 residues: NADH-ubiquinone oxidoreductase chain 2 (347 aa).

Helical transmembrane passes span 3 to 23, 25 to 45, 59 to 79, 96 to 116, 122 to 142, 149 to 169, 178 to 198, 200 to 220, 242 to 262, 274 to 294, and 323 to 343; these read PPIL…VLMS, HWLM…PILM, YFLT…INLM, TMMT…FWVP, VHMS…LLVL, IDPN…GWGG, ILAY…LYNP, MMLL…MLFM, SLIL…GFIP, EMII…YFYM, and MILL…TPLL.

This sequence belongs to the complex I subunit 2 family. Core subunit of respiratory chain NADH dehydrogenase (Complex I) which is composed of 45 different subunits. Interacts with TMEM242.

The protein localises to the mitochondrion inner membrane. The catalysed reaction is a ubiquinone + NADH + 5 H(+)(in) = a ubiquinol + NAD(+) + 4 H(+)(out). Its function is as follows. Core subunit of the mitochondrial membrane respiratory chain NADH dehydrogenase (Complex I) that is believed to belong to the minimal assembly required for catalysis. Complex I functions in the transfer of electrons from NADH to the respiratory chain. The immediate electron acceptor for the enzyme is believed to be ubiquinone. The protein is NADH-ubiquinone oxidoreductase chain 2 of Suricata suricatta (Meerkat).